Consider the following 258-residue polypeptide: Small ribosomal subunit protein uS2 (258 aa).

The tract at residues 226–258 (AQNKDVEPVADKDEKPEAAPVDEAETATETTGE) is disordered. Basic and acidic residues predominate over residues 229–242 (KDVEPVADKDEKPE). Positions 245–258 (PVDEAETATETTGE) are enriched in acidic residues.

It belongs to the universal ribosomal protein uS2 family.

The chain is Small ribosomal subunit protein uS2 from Solidesulfovibrio magneticus (strain ATCC 700980 / DSM 13731 / RS-1) (Desulfovibrio magneticus).